A 501-amino-acid chain; its full sequence is Glycerol kinase (501 aa).

Thr-11 is a binding site for ADP. ATP contacts are provided by Thr-11, Thr-12, and Ser-13. Thr-11 is a sn-glycerol 3-phosphate binding site. An ADP-binding site is contributed by Arg-15. 4 residues coordinate sn-glycerol 3-phosphate: Arg-81, Glu-82, Tyr-133, and Asp-242. Residues Arg-81, Glu-82, Tyr-133, Asp-242, and Gln-243 each coordinate glycerol. 2 residues coordinate ADP: Thr-264 and Gly-307. ATP-binding residues include Thr-264, Gly-307, Gln-311, and Gly-409. Positions 409 and 413 each coordinate ADP.

The protein belongs to the FGGY kinase family.

The enzyme catalyses glycerol + ATP = sn-glycerol 3-phosphate + ADP + H(+). It participates in polyol metabolism; glycerol degradation via glycerol kinase pathway; sn-glycerol 3-phosphate from glycerol: step 1/1. Inhibited by fructose 1,6-bisphosphate (FBP). Functionally, key enzyme in the regulation of glycerol uptake and metabolism. Catalyzes the phosphorylation of glycerol to yield sn-glycerol 3-phosphate. This chain is Glycerol kinase, found in Borreliella afzelii (strain PKo) (Borrelia afzelii).